The chain runs to 240 residues: Uridylate kinase (240 aa).

14-17 (KLSG) is an ATP binding site. G56 provides a ligand contact to UMP. G57 and R61 together coordinate ATP. Residues D76 and 137–144 (TGNPFFTT) contribute to the UMP site. Positions 164, 170, and 173 each coordinate ATP.

This sequence belongs to the UMP kinase family. As to quaternary structure, homohexamer.

It is found in the cytoplasm. It catalyses the reaction UMP + ATP = UDP + ADP. Its pathway is pyrimidine metabolism; CTP biosynthesis via de novo pathway; UDP from UMP (UMPK route): step 1/1. Its activity is regulated as follows. Inhibited by UTP. Functionally, catalyzes the reversible phosphorylation of UMP to UDP. The chain is Uridylate kinase from Paracidovorax citrulli (strain AAC00-1) (Acidovorax citrulli).